Consider the following 571-residue polypeptide: Potassium-transporting ATPase potassium-binding subunit (571 aa).

A run of 12 helical transmembrane segments spans residues 5–25 (GWMQ…PLGG), 64–84 (LAYA…LYAL), 136–156 (GLTH…VALI), 179–199 (LYVL…QGMP), 220–240 (VGPV…GGFF), 254–274 (LSNF…TNVF), 285–305 (WAIL…TYWA), 330–350 (FGIA…CGAV), 375–395 (IIGG…VAIF), 421–441 (MLGI…ATVV), 488–508 (LAIG…AIAG), and 527–547 (GGLF…LTFF).

It belongs to the KdpA family. In terms of assembly, the system is composed of three essential subunits: KdpA, KdpB and KdpC.

The protein resides in the cell inner membrane. Functionally, part of the high-affinity ATP-driven potassium transport (or Kdp) system, which catalyzes the hydrolysis of ATP coupled with the electrogenic transport of potassium into the cytoplasm. This subunit binds the periplasmic potassium ions and delivers the ions to the membrane domain of KdpB through an intramembrane tunnel. The polypeptide is Potassium-transporting ATPase potassium-binding subunit (Methylorubrum extorquens (strain CM4 / NCIMB 13688) (Methylobacterium extorquens)).